A 745-amino-acid chain; its full sequence is Junction plakoglobin (745 aa).

Met-1 carries the post-translational modification N-acetylmethionine. A glycan (O-linked (GlcNAc) threonine) is linked at Thr-14. A phosphoserine mark is found at Ser-99 and Ser-125. 12 ARM repeats span residues 132–171 (NYQD…QLSK), 172–215 (KEAS…LSHH), 216–255 (REGL…NLLL), 258–297 (EGAK…LLAY), 298–341 (GNQE…LSVC), 342–381 (PSNK…NLSD), 383–420 (ATKQ…NLTC), 423–464 (SKNK…HLTS), 470–510 (EMAQ…NLAL), 512–551 (PANH…QPYT), 574–613 (PMNR…ELAQ), and 615–661 (KEAA…PDYR). Residues 132 to 297 (NYQDDAELAT…TTDCLQLLAY (166 aa)) form an interaction with DSC1 and DSG1 region. Residue Ser-182 is modified to Phosphoserine. The tract at residues 574–661 (PMNRMEIFRL…ISEDKNPDYR (88 aa)) is interaction with DSC1. A phosphoserine mark is found at Ser-665 and Ser-730.

Belongs to the beta-catenin family. In terms of assembly, homodimer. Component of an E-cadherin/catenin adhesion complex composed of at least E-cadherin/CDH1 and gamma-catenin/JUP, and possibly alpha-catenin/CTNNA1; the complex is located to adherens junctions. The stable association of CTNNA1 is controversial as CTNNA1 was shown not to bind to F-actin when assembled in the complex. Interacts with MUC1. Interacts with CAV1. Interacts with PTPRJ. Interacts with DSG1. Interacts with DSC1 and DSC2. Interacts with PKP2. Interacts with PKP3 (via N-terminus); the interaction is required for PKP3 localization to desmosome cell-cell junctions. Interacts with DSG4. May be phosphorylated by FER. In terms of tissue distribution, expressed in the mammary epithelium (at protein level).

Its subcellular location is the cell junction. It is found in the adherens junction. It localises to the desmosome. The protein localises to the cytoplasm. The protein resides in the cytoskeleton. Its subcellular location is the cell membrane. It is found in the nucleus. In terms of biological role, common junctional plaque protein. The membrane-associated plaques are architectural elements in an important strategic position to influence the arrangement and function of both the cytoskeleton and the cells within the tissue. The presence of plakoglobin in both the desmosomes and in the intermediate junctions suggests that it plays a central role in the structure and function of submembranous plaques. Acts as a substrate for VE-PTP and is required by it to stimulate VE-cadherin function in endothelial cells. Can replace beta-catenin in E-cadherin/catenin adhesion complexes which are proposed to couple cadherins to the actin cytoskeleton. This is Junction plakoglobin from Mus musculus (Mouse).